The primary structure comprises 407 residues: Aminomethyltransferase, mitochondrial (407 aa).

The N-terminal 29 residues, 1 to 29, are a transit peptide targeting the mitochondrion; it reads MRGGLWQLGQSITRRLGQSDKKTIVRRCY. Substrate contacts are provided by glutamate 234, arginine 265, and tyrosine 403.

The protein belongs to the GcvT family. The glycine cleavage system is composed of four proteins: P, T, L and H.

The protein localises to the mitochondrion. The catalysed reaction is N(6)-[(R)-S(8)-aminomethyldihydrolipoyl]-L-lysyl-[protein] + (6S)-5,6,7,8-tetrahydrofolate = N(6)-[(R)-dihydrolipoyl]-L-lysyl-[protein] + (6R)-5,10-methylene-5,6,7,8-tetrahydrofolate + NH4(+). The glycine cleavage system catalyzes the degradation of glycine. The sequence is that of Aminomethyltransferase, mitochondrial (GDCST) from Flaveria anomala (Yellowtops).